A 173-amino-acid chain; its full sequence is Putative metal-dependent hydrolase BcerKBAB4_2443 (173 aa).

Zn(2+) is bound by residues His65, His156, and His160.

This sequence belongs to the metal hydrolase YfiT family. Homodimer. Zn(2+) serves as cofactor.

Its subcellular location is the cytoplasm. Its function is as follows. Possible metal-dependent hydrolase. This is Putative metal-dependent hydrolase BcerKBAB4_2443 from Bacillus mycoides (strain KBAB4) (Bacillus weihenstephanensis).